Consider the following 240-residue polypeptide: Orotidine 5'-phosphate decarboxylase (240 aa).

Residues Asp-15, Lys-37, 64 to 73 (DLKYHDIPNT), Thr-127, Arg-188, Gln-197, Gly-217, and Arg-218 each bind substrate. Lys-66 acts as the Proton donor in catalysis.

This sequence belongs to the OMP decarboxylase family. Type 1 subfamily. As to quaternary structure, homodimer.

The catalysed reaction is orotidine 5'-phosphate + H(+) = UMP + CO2. The protein operates within pyrimidine metabolism; UMP biosynthesis via de novo pathway; UMP from orotate: step 2/2. Its function is as follows. Catalyzes the decarboxylation of orotidine 5'-monophosphate (OMP) to uridine 5'-monophosphate (UMP). This is Orotidine 5'-phosphate decarboxylase from Citrifermentans bemidjiense (strain ATCC BAA-1014 / DSM 16622 / JCM 12645 / Bem) (Geobacter bemidjiensis).